The primary structure comprises 242 residues: ATP synthase subunit a, organellar chromatophore (242 aa).

The next 5 helical transmembrane spans lie at 28 to 48 (LHGQVFISSWVVISALLVLVI), 89 to 109 (LPFIGTLFLFIFGCNWGGALV), 128 to 148 (INTTVAMALLVSLSYFYAGLS), 193 to 213 (LVVGVLAFLVPILVPLPAMFL), and 214 to 234 (GLFTSAIQALIFATLAANYIG).

Belongs to the ATPase A chain family. In terms of assembly, F-type ATPases have 2 components, CF(1) - the catalytic core - and CF(0) - the membrane proton channel. CF(1) has five subunits: alpha(3), beta(3), gamma(1), delta(1), epsilon(1). CF(0) has four main subunits: a, b, b' and c.

Its subcellular location is the plastid. It is found in the organellar chromatophore thylakoid membrane. In terms of biological role, key component of the proton channel; it plays a direct role in the translocation of protons across the membrane. This chain is ATP synthase subunit a, organellar chromatophore, found in Paulinella chromatophora.